We begin with the raw amino-acid sequence, 125 residues long: Small ribosomal subunit protein uS13 (125 aa).

Residues 94-125 (SLPVRGQRTRTNARTRKGKRKTVAGKKKAVKK) form a disordered region.

The protein belongs to the universal ribosomal protein uS13 family. In terms of assembly, part of the 30S ribosomal subunit. Forms a loose heterodimer with protein S19. Forms two bridges to the 50S subunit in the 70S ribosome.

In terms of biological role, located at the top of the head of the 30S subunit, it contacts several helices of the 16S rRNA. In the 70S ribosome it contacts the 23S rRNA (bridge B1a) and protein L5 of the 50S subunit (bridge B1b), connecting the 2 subunits; these bridges are implicated in subunit movement. Contacts the tRNAs in the A and P-sites. The polypeptide is Small ribosomal subunit protein uS13 (Chlorobium chlorochromatii (strain CaD3)).